A 459-amino-acid chain; its full sequence is FBD-associated F-box protein At4g13985 (459 aa).

The F-box domain occupies 18–64 (VDRLRNLPDCLLFKILLNLPTKDVVKLSVLSRRWRNVWRYVPGLDLE). The FBD domain occupies 375 to 429 (KEGANILPGPRRFLTSLEYVKIAKPMAAEASEIKLKLVSYFLENSTILKKLTLCL).

The polypeptide is FBD-associated F-box protein At4g13985 (Arabidopsis thaliana (Mouse-ear cress)).